Here is a 736-residue protein sequence, read N- to C-terminus: Catalase-peroxidase 2 (736 aa).

The signal sequence occupies residues 1-23 (MIKKTLPVLILLALSGSFSTAVA). The tryptophyl-tyrosyl-methioninium (Trp-Tyr) (with M-249) cross-link spans 102–223 (WHGAGTYRTY…LAATQMGLIY (122 aa)). Residue histidine 103 is the Proton acceptor of the active site. A cross-link (tryptophyl-tyrosyl-methioninium (Tyr-Met) (with W-102)) is located at residues 223-249 (YVNPEGPGGKPDPLASAKDIREAFSRM). Histidine 264 lines the heme b pocket.

The protein belongs to the peroxidase family. Peroxidase/catalase subfamily. As to quaternary structure, homodimer or homotetramer. Heme b is required as a cofactor. Formation of the three residue Trp-Tyr-Met cross-link is important for the catalase, but not the peroxidase activity of the enzyme.

The protein localises to the periplasm. It carries out the reaction H2O2 + AH2 = A + 2 H2O. The enzyme catalyses 2 H2O2 = O2 + 2 H2O. Functionally, bifunctional enzyme with both catalase and broad-spectrum peroxidase activity. In Escherichia coli O157:H7, this protein is Catalase-peroxidase 2.